The primary structure comprises 209 residues: ATP-dependent Clp protease proteolytic subunit 2 (209 aa).

S106 functions as the Nucleophile in the catalytic mechanism. H131 is an active-site residue.

This sequence belongs to the peptidase S14 family. Fourteen ClpP subunits assemble into 2 heptameric rings which stack back to back to give a disk-like structure with a central cavity, resembling the structure of eukaryotic proteasomes.

Its subcellular location is the cytoplasm. The catalysed reaction is Hydrolysis of proteins to small peptides in the presence of ATP and magnesium. alpha-casein is the usual test substrate. In the absence of ATP, only oligopeptides shorter than five residues are hydrolyzed (such as succinyl-Leu-Tyr-|-NHMec, and Leu-Tyr-Leu-|-Tyr-Trp, in which cleavage of the -Tyr-|-Leu- and -Tyr-|-Trp bonds also occurs).. In terms of biological role, cleaves peptides in various proteins in a process that requires ATP hydrolysis. Has a chymotrypsin-like activity. Plays a major role in the degradation of misfolded proteins. In Mesorhizobium japonicum (strain LMG 29417 / CECT 9101 / MAFF 303099) (Mesorhizobium loti (strain MAFF 303099)), this protein is ATP-dependent Clp protease proteolytic subunit 2.